Here is a 273-residue protein sequence, read N- to C-terminus: 4-hydroxy-tetrahydrodipicolinate reductase (273 aa).

Residues 12 to 17 and Glu38 contribute to the NAD(+) site; that span reads GAGGRM. Position 39 (Arg39) interacts with NADP(+). Residues 102–104 and 126–129 each bind NAD(+); these read GTT and AANF. His159 acts as the Proton donor/acceptor in catalysis. Residue His160 coordinates (S)-2,3,4,5-tetrahydrodipicolinate. Lys163 serves as the catalytic Proton donor. 169 to 170 is a (S)-2,3,4,5-tetrahydrodipicolinate binding site; sequence GT.

Belongs to the DapB family. As to quaternary structure, homotetramer.

The protein resides in the cytoplasm. It carries out the reaction (S)-2,3,4,5-tetrahydrodipicolinate + NAD(+) + H2O = (2S,4S)-4-hydroxy-2,3,4,5-tetrahydrodipicolinate + NADH + H(+). It catalyses the reaction (S)-2,3,4,5-tetrahydrodipicolinate + NADP(+) + H2O = (2S,4S)-4-hydroxy-2,3,4,5-tetrahydrodipicolinate + NADPH + H(+). It participates in amino-acid biosynthesis; L-lysine biosynthesis via DAP pathway; (S)-tetrahydrodipicolinate from L-aspartate: step 4/4. In terms of biological role, catalyzes the conversion of 4-hydroxy-tetrahydrodipicolinate (HTPA) to tetrahydrodipicolinate. The protein is 4-hydroxy-tetrahydrodipicolinate reductase of Salmonella choleraesuis (strain SC-B67).